Here is a 400-residue protein sequence, read N- to C-terminus: Acetate kinase (400 aa).

Asparagine 9 provides a ligand contact to Mg(2+). Lysine 16 serves as a coordination point for ATP. A substrate-binding site is contributed by arginine 90. The active-site Proton donor/acceptor is aspartate 147. ATP is bound by residues 207–211, 282–284, and 330–334; these read HIGNG, DLR, and GIGEN. Residue glutamate 385 participates in Mg(2+) binding.

It belongs to the acetokinase family. Homodimer. Mg(2+) is required as a cofactor. Requires Mn(2+) as cofactor.

Its subcellular location is the cytoplasm. The catalysed reaction is acetate + ATP = acetyl phosphate + ADP. The protein operates within metabolic intermediate biosynthesis; acetyl-CoA biosynthesis; acetyl-CoA from acetate: step 1/2. In terms of biological role, catalyzes the formation of acetyl phosphate from acetate and ATP. Can also catalyze the reverse reaction. This is Acetate kinase from Staphylococcus aureus (strain USA300).